The sequence spans 236 residues: Small ribosomal subunit protein uS2c (236 aa).

The protein belongs to the universal ribosomal protein uS2 family.

Its subcellular location is the plastid. It is found in the chloroplast. The protein is Small ribosomal subunit protein uS2c (rps2) of Buxus microphylla (Littleleaf boxwood).